A 202-amino-acid polypeptide reads, in one-letter code: Imidazole glycerol phosphate synthase subunit HisH 2 (202 aa).

Residues 1–202 enclose the Glutamine amidotransferase type-1 domain; it reads MIAIIDYGMG…KLMENFIKQA (202 aa). The active-site Nucleophile is the Cys80. Active-site residues include His183 and Glu185.

As to quaternary structure, heterodimer of HisH and HisF.

Its subcellular location is the cytoplasm. It catalyses the reaction 5-[(5-phospho-1-deoxy-D-ribulos-1-ylimino)methylamino]-1-(5-phospho-beta-D-ribosyl)imidazole-4-carboxamide + L-glutamine = D-erythro-1-(imidazol-4-yl)glycerol 3-phosphate + 5-amino-1-(5-phospho-beta-D-ribosyl)imidazole-4-carboxamide + L-glutamate + H(+). It carries out the reaction L-glutamine + H2O = L-glutamate + NH4(+). It functions in the pathway amino-acid biosynthesis; L-histidine biosynthesis; L-histidine from 5-phospho-alpha-D-ribose 1-diphosphate: step 5/9. Its function is as follows. IGPS catalyzes the conversion of PRFAR and glutamine to IGP, AICAR and glutamate. The HisH subunit provides the glutamine amidotransferase activity that produces the ammonia necessary to HisF for the synthesis of IGP and AICAR. In Methanococcus maripaludis (strain DSM 14266 / JCM 13030 / NBRC 101832 / S2 / LL), this protein is Imidazole glycerol phosphate synthase subunit HisH 2 (hisH2).